Consider the following 921-residue polypeptide: Probable dipeptidyl-aminopeptidase B (921 aa).

2 disordered regions span residues 1 to 33 (MAGH…TAST) and 45 to 66 (VAAN…RGER). Residues 1–109 (MAGHPEENAQ…NKSVDKKLRR (109 aa)) lie on the Cytoplasmic side of the membrane. Positions 10–22 (QLLSTEQESMSRN) are enriched in polar residues. Residues 23-33 (SSDSVASTAST) show a composition bias toward low complexity. A helical; Signal-anchor for type II membrane protein membrane pass occupies residues 110-130 (LIWIIGGVFIGAWVLALFIFL). The Vacuolar portion of the chain corresponds to 131-921 (GKQAYKHSSE…VPLEIDAAKV (791 aa)). The interval 138-157 (SSESPHDPQATSSRGSGKKV) is disordered. N-linked (GlcNAc...) asparagine glycosylation occurs at Asn-362. Ser-768 functions as the Charge relay system in the catalytic mechanism. N-linked (GlcNAc...) asparagine glycosylation is present at Asn-822. Residues Asp-845 and His-878 each act as charge relay system in the active site.

It belongs to the peptidase S9B family.

Its subcellular location is the vacuole membrane. The catalysed reaction is Release of an N-terminal dipeptide, Xaa-Yaa-|-Zaa-, from a polypeptide, preferentially when Yaa is Pro, provided Zaa is neither Pro nor hydroxyproline.. In terms of biological role, type IV dipeptidyl-peptidase which removes N-terminal dipeptides sequentially from polypeptides having unsubstituted N-termini provided that the penultimate residue is proline. This Botryotinia fuckeliana (strain B05.10) (Noble rot fungus) protein is Probable dipeptidyl-aminopeptidase B (dapB).